We begin with the raw amino-acid sequence, 398 residues long: tRNA pseudouridine synthase D (398 aa).

The active-site Nucleophile is the aspartate 76. In terms of domain architecture, TRUD spans 151–360 (GVPNFFGEQR…MPGERRPLRI (210 aa)).

It belongs to the pseudouridine synthase TruD family.

The catalysed reaction is uridine(13) in tRNA = pseudouridine(13) in tRNA. In terms of biological role, responsible for synthesis of pseudouridine from uracil-13 in transfer RNAs. This Syntrophotalea carbinolica (strain DSM 2380 / NBRC 103641 / GraBd1) (Pelobacter carbinolicus) protein is tRNA pseudouridine synthase D.